The sequence spans 1652 residues: Venom factor (1652 aa).

The signal sequence occupies residues 1–22 (MEGMALYLVAALLIGFPASSFG). Mg(2+)-binding residues include Pro519, Asp542, Val543, and Asp545. Cystine bridges form between Cys547-Cys808, Cys616-Cys651, Cys684-Cys711, Cys685-Cys718, Cys698-Cys719, Cys864-Cys1502, Cys1347-Cys1478, Cys1378-Cys1447, Cys1495-Cys1500, Cys1507-Cys1579, Cys1526-Cys1650, and Cys1626-Cys1635. A propeptide spanning residues 657–740 (RRRRRSVVLL…REDELFLARS (84 aa)) is cleaved from the precursor. The tract at residues 661–739 (RSVVLLDSKA…KREDELFLAR (79 aa)) is C3a-like domain. The region spanning 684-719 (CCEDGMHENPMGYSCEKREKYIQEGDACKAAFLECC) is the Anaphylatoxin-like domain. The interval 743–754 (EDEFFGEDNIIS) is factor B binding site. The propeptide occupies 992–1270 (HLIITPSGCG…VVGFQGLAEY (279 aa)). Residues 992–1270 (HLIITPSGCG…VVGFQGLAEY (279 aa)) form a C3d-like domain region. The segment at residues 1000–1003 (CGEQ) is a cross-link (isoglutamyl cysteine thioester (Cys-Gln)). The segment at 1197-1260 (VLMAASTERN…GGTYGQTQAT (64 aa)) is factor H binding site. The region spanning 1507–1650 (CSLLNQQKKI…LSNTLTIFGC (144 aa)) is the NTR domain.

The protein belongs to the venom complement C3 homolog family. As to quaternary structure, heterotrimer of alpha, beta and gamma chains; disulfide-linked. Is active with factor B in the presence of factor D. First processed by the removal of 4 Arg residues by furin-type protease, forming two chains, alpha and gamma/beta precursor, linked by a disulfide bond. Probably, a cobrin-like protease cleaves the C3a-like domain and then the C3d-like domain, generating the mature venom factor (VF). As to expression, expressed by the venom gland.

Its subcellular location is the secreted. Functionally, complement-activating protein in venom. It is a structural and functional analog of complement component C3b, the activated form of C3. It binds factor B (CFB), which is subsequently cleaved by factor D (CFD) to form the bimolecular complex VF/Bb. VF/Bb is a C3/C5 convertase that cleaves both complement components C3 and C5. Structurally, it resembles the C3b degradation product C3c, which is not able to form a C3/C5 convertase. Unlike C3b/Bb, VF/Bb is a stable complex and completely resistant to the actions of complement regulatory factors H (CFH) and I (CFI). Therefore, VF continuously activates complement resulting in the depletion of complement activity. The chain is Venom factor from Crotalus adamanteus (Eastern diamondback rattlesnake).